A 218-amino-acid polypeptide reads, in one-letter code: Ribose-5-phosphate isomerase A (218 aa).

Residues 28–31, 81–84, and 94–97 contribute to the substrate site; these read TGST, DSAD, and KGKG. Glu-103 functions as the Proton acceptor in the catalytic mechanism. A substrate-binding site is contributed by Lys-121.

It belongs to the ribose 5-phosphate isomerase family. Homodimer.

It catalyses the reaction aldehydo-D-ribose 5-phosphate = D-ribulose 5-phosphate. The protein operates within carbohydrate degradation; pentose phosphate pathway; D-ribose 5-phosphate from D-ribulose 5-phosphate (non-oxidative stage): step 1/1. Catalyzes the reversible conversion of ribose-5-phosphate to ribulose 5-phosphate. This chain is Ribose-5-phosphate isomerase A, found in Blochmanniella pennsylvanica (strain BPEN).